The sequence spans 206 residues: Large ribosomal subunit protein uL4 (206 aa).

Over residues 48–59 (THDTKTRSEVRG) the composition is skewed to basic and acidic residues. A disordered region spans residues 48-77 (THDTKTRSEVRGGGRKPWRQKGTGRARHGS). The span at 60 to 77 (GGRKPWRQKGTGRARHGS) shows a compositional bias: basic residues.

This sequence belongs to the universal ribosomal protein uL4 family. Part of the 50S ribosomal subunit.

Its function is as follows. One of the primary rRNA binding proteins, this protein initially binds near the 5'-end of the 23S rRNA. It is important during the early stages of 50S assembly. It makes multiple contacts with different domains of the 23S rRNA in the assembled 50S subunit and ribosome. Forms part of the polypeptide exit tunnel. In Pelotomaculum thermopropionicum (strain DSM 13744 / JCM 10971 / SI), this protein is Large ribosomal subunit protein uL4.